We begin with the raw amino-acid sequence, 177 residues long: Probable chemoreceptor glutamine deamidase CheD (177 aa).

This sequence belongs to the CheD family.

It carries out the reaction L-glutaminyl-[protein] + H2O = L-glutamyl-[protein] + NH4(+). Probably deamidates glutamine residues to glutamate on methyl-accepting chemotaxis receptors (MCPs), playing an important role in chemotaxis. The protein is Probable chemoreceptor glutamine deamidase CheD of Pseudomonas syringae pv. syringae (strain B728a).